Reading from the N-terminus, the 196-residue chain is Lipoprotein signal peptidase (196 aa).

3 helical membrane-spanning segments follow: residues 43–63 (LMLKVTAFLNMVYTWNYGISF), 75–95 (AVFILTNSIIVCYLYYLMVCS), and 100–120 (GFAGYSFVIGGAVGNLIDRLF). Active-site residues include Asp-126 and Asp-144. A helical membrane pass occupies residues 135-155 (YSFPVFNLADCFITIGVIILI).

The protein belongs to the peptidase A8 family.

It is found in the cell inner membrane. It carries out the reaction Release of signal peptides from bacterial membrane prolipoproteins. Hydrolyzes -Xaa-Yaa-Zaa-|-(S,diacylglyceryl)Cys-, in which Xaa is hydrophobic (preferably Leu), and Yaa (Ala or Ser) and Zaa (Gly or Ala) have small, neutral side chains.. Its pathway is protein modification; lipoprotein biosynthesis (signal peptide cleavage). Functionally, this protein specifically catalyzes the removal of signal peptides from prolipoproteins. This is Lipoprotein signal peptidase from Rickettsia canadensis (strain McKiel).